We begin with the raw amino-acid sequence, 145 residues long: MAFMRSHSNASSGMGVAPDIRDTFLELQMKKAFRYVIFKIEEKQKQVVVEKTGATTESYDDFLASLPENDCRYALYDFDFVTGENVQKSKIFFIAWSPSTSRIRAKMLYSTSKDRIKQELDGFHYEIQATDPTEVDLEVLRERAH.

Residues 13-145 (GMGVAPDIRD…DLEVLRERAH (133 aa)) form the ADF-H domain.

The protein belongs to the actin-binding proteins ADF family.

Its function is as follows. Actin-depolymerizing protein. Severs actin filaments (F-actin) and binds to actin monomers. The chain is Actin-depolymerizing factor 2 (ADF2) from Oryza sativa subsp. japonica (Rice).